Consider the following 344-residue polypeptide: Rho guanine nucleotide exchange factor 39 (344 aa).

Residues 22 to 197 (KRVCTARELL…SETAQKVHAI (176 aa)) form the DH domain. The region spanning 227–331 (WFLRQGWLLV…WHHSLTLAIR (105 aa)) is the PH domain.

Its subcellular location is the cell membrane. In terms of biological role, promotes cell proliferation. This Mus musculus (Mouse) protein is Rho guanine nucleotide exchange factor 39 (Arhgef39).